The following is a 188-amino-acid chain: GMP synthase [glutamine-hydrolyzing] subunit A (188 aa).

A Glutamine amidotransferase type-1 domain is found at 1-188 (MIVIMDNGGQ…RNFAELCGEL (188 aa)). Residue Cys78 is the Nucleophile of the active site. Residues His165 and Glu167 contribute to the active site.

As to quaternary structure, heterodimer composed of a glutamine amidotransferase subunit (A) and a GMP-binding subunit (B).

The catalysed reaction is XMP + L-glutamine + ATP + H2O = GMP + L-glutamate + AMP + diphosphate + 2 H(+). It participates in purine metabolism; GMP biosynthesis; GMP from XMP (L-Gln route): step 1/1. In terms of biological role, catalyzes the synthesis of GMP from XMP. The polypeptide is GMP synthase [glutamine-hydrolyzing] subunit A (Thermococcus kodakarensis (strain ATCC BAA-918 / JCM 12380 / KOD1) (Pyrococcus kodakaraensis (strain KOD1))).